The chain runs to 321 residues: Non-canonical heme oxygenase HOZ, chloroplastic (321 aa).

The N-terminal 45 residues, 1 to 45, are a transit peptide targeting the chloroplast; the sequence is MKSLVAHFSTPLITARLVPRCIIHRASISAVSFSTVRRRFSPLTM. A dimerization region spans residues 96 to 116; sequence CGMLSTFSQKYEGYPSGSMVD. Positions 130, 134, and 135 each coordinate heme b. Dimerization stretches follow at residues 144–166 and 205–208; these read KCSL…LHGD and KVVR.

Homodimer. Binds to heme in the interdimer interface; the heme iron is coordinated by a fixed water molecule.

It localises to the plastid. The protein resides in the chloroplast. Functionally, dimeric beta-barrel protein binding to heme and catalyzing its degradation to produce biliverdin. May function in the tetrapyrrole biosynthetic pathway. In Arabidopsis thaliana (Mouse-ear cress), this protein is Non-canonical heme oxygenase HOZ, chloroplastic.